Consider the following 633-residue polypeptide: MADSLDHAPAQANNLPQFLALTIGAIGVVYGDIGTSPLYAFREALRPFGPGGVGRDEVIGLVSLVLWTLTAIVTIKYVLFLLRADNDGEGGTLSLLALLLKKGTKYPVLMFFAGVLGAALFIGDAMITPALSVLSAVEGLKLVAPALHDYVLPISVVIILLLFAVQSRGTGAVSVFFGPITLVWFLMMAAAGVAHIGDDLAILSAFNPLNAIGFLWNAGLIGFIVLGAIFLTVTGAEALYADLGHFGRHSIQAAWFAVVFPALALNYLGQGALVLSHPDAISNPFFLMFPNWALLPMVILATAATIIASQSVITGAFSLIRQAIHLGFLPRFEICYTSETQTGQIYLPLVNTILLTGVLALMLMFGSSEALAPAYGVSITGAMVIDTILAFEFVRRQWGWPALTAIAVLLPLFNLELVFLGANLLKVHHGGYVPILIAGTLITMMWTWRKGVSVLREKTARQDIPLSQFMAIVERKSEHAPVQVPGTAIFLTATPDTTPAVLLHNIKHNHVLHQHNVIMTIKTARVPYVPEKDRYTITKLSDRFSLLELRFGFMDDQNVSRALARCRKEGFKFEIMSTSFYLGRRKLIADPQSGLPQWQDKLFIAMADSAIDPTEYFHLPANRVVELGEQVII.

Transmembrane regions (helical) follow at residues Phe18–Leu38, Leu61–Leu81, Pro107–Ile127, Val143–Phe163, Val173–Val193, Ala211–Leu231, Trp255–Leu275, Leu287–Ile307, Ile345–Phe365, Leu371–Phe391, Ala402–Ala422, and Val427–Thr447.

Belongs to the HAK/KUP transporter (TC 2.A.72) family.

The protein resides in the cell inner membrane. The enzyme catalyses K(+)(in) + H(+)(in) = K(+)(out) + H(+)(out). Transport of potassium into the cell. Likely operates as a K(+):H(+) symporter. The polypeptide is Probable potassium transport system protein Kup 2 (Rhizobium meliloti (strain 1021) (Ensifer meliloti)).